We begin with the raw amino-acid sequence, 427 residues long: MESLTLQPIARVDGTINLPGSKSVSNRALLLAALAHGKTVLTNLLDSDDVRHMLNALTGLGVSYTLSADRTRCEIIGNGGPLHAEGALELFLGNAGTAMRPLAAALCLGSNDIVLTGEPRMKERPIGHLVDALRLGGAKITYLEQENYPPLRLQGGFTGGNVDVDGSVSSQFLTALLMTAPLAPEDTVIRIKGDLVSKPYIDITLNLMKTFGVEIENQHYQQFVVKGGQSYQSPGTYLVEGDASSASYFLAAAAIKGGTVKVTGIGRNSMQGDIRFADVLEKMGATICWGDDYISCTRGELNAIDMDMNHIPDAAMTIATAALFAKGTTTLRNIYNWRVKETDRLFAMATELRKVGAEVEEGHDYIRITPPEKLNFAEIATYNDHRMAMCFSLVALSDTPVTILDPKCTAKTFPDYFEQLARISQAA.

3-phosphoshikimate is bound by residues K22, S23, and R27. Position 22 (K22) interacts with phosphoenolpyruvate. 2 residues coordinate phosphoenolpyruvate: G96 and R124. Positions 169, 170, 171, 197, 313, 336, and 340 each coordinate 3-phosphoshikimate. Position 171 (Q171) interacts with phosphoenolpyruvate. The active-site Proton acceptor is the D313. Phosphoenolpyruvate is bound by residues R344, R386, and K411.

The protein belongs to the EPSP synthase family. In terms of assembly, monomer.

It localises to the cytoplasm. It catalyses the reaction 3-phosphoshikimate + phosphoenolpyruvate = 5-O-(1-carboxyvinyl)-3-phosphoshikimate + phosphate. The protein operates within metabolic intermediate biosynthesis; chorismate biosynthesis; chorismate from D-erythrose 4-phosphate and phosphoenolpyruvate: step 6/7. Its function is as follows. Catalyzes the transfer of the enolpyruvyl moiety of phosphoenolpyruvate (PEP) to the 5-hydroxyl of shikimate-3-phosphate (S3P) to produce enolpyruvyl shikimate-3-phosphate and inorganic phosphate. The protein is 3-phosphoshikimate 1-carboxyvinyltransferase of Escherichia coli O9:H4 (strain HS).